Reading from the N-terminus, the 312-residue chain is Olfactory receptor 6C75 (312 aa).

At 1–23 (MRNSTAVTDFILLGLTSDPQWQV) the chain is on the extracellular side. N-linked (GlcNAc...) asparagine glycosylation occurs at N3. The chain crosses the membrane as a helical span at residues 24 to 44 (VLFIFLLVTYMLSVTGNLIII). The Cytoplasmic segment spans residues 45–63 (TLTLSDPHLQTPMYFFLRN). Residues 64–84 (FSFLEISFTSVCIPRFLVTVV) traverse the membrane as a helical segment. Over 85-95 (TGNRTISYNGC) the chain is Extracellular. C95 and C177 are oxidised to a cystine. The helical transmembrane segment at 96-116 (VAQLFFFIFLGVTEFYLLAAM) threads the bilayer. The Cytoplasmic segment spans residues 117–140 (SYDRCMAICKPLHYTIIMSTRVCT). The helical transmembrane segment at 141-161 (LLVFSSWLAGFLIIFPPVMLL) threads the bilayer. Residues 162-194 (LQLDFCASNVIDHFICDSSPMLQLSCTNTHFLE) are Extracellular-facing. A helical membrane pass occupies residues 195 to 215 (LMAFFLAVVTLMVTLTLVILS). The Cytoplasmic segment spans residues 216–237 (YTNIIRTILKIPSMSQRKKAFS). The chain crosses the membrane as a helical span at residues 238–258 (TCSSHMIVVSISYSSCIFMYI). Residues 259–269 (KTSARERVTLS) are Extracellular-facing. The chain crosses the membrane as a helical span at residues 270–290 (KGVAVLNTSVAPLLNPFIYTL). Residues 291–312 (RNKQVKQAFKSMVQKMIFSLNK) lie on the Cytoplasmic side of the membrane.

The protein belongs to the G-protein coupled receptor 1 family.

The protein localises to the cell membrane. In terms of biological role, odorant receptor. In Homo sapiens (Human), this protein is Olfactory receptor 6C75 (OR6C75).